A 137-amino-acid polypeptide reads, in one-letter code: Chaperone protein YscB (137 aa).

In terms of assembly, interacts with SycN to form a complex which specifically binds to YopN.

It localises to the cytoplasm. The protein localises to the cell inner membrane. Its function is as follows. Functions as a specific chaperone for YopN. It could facilitate the secretion and the subsequent translocation of YopN. The sequence is that of Chaperone protein YscB (yscB) from Yersinia enterocolitica.